A 193-amino-acid polypeptide reads, in one-letter code: Epididymal-specific lipocalin-12 (193 aa).

The signal sequence occupies residues methionine 1–serine 19. Cysteine 88 and cysteine 193 are oxidised to a cystine. Asparagine 143 and asparagine 172 each carry an N-linked (GlcNAc...) asparagine glycan.

The protein belongs to the calycin superfamily. Lipocalin family. Monomer. As to expression, expressed in epididymis.

The protein resides in the secreted. Functionally, binds all-trans retinoic acid and may act as a retinoid carrier protein within the epididymis. May play a role in male fertility. The polypeptide is Epididymal-specific lipocalin-12 (Lcn12) (Mus musculus (Mouse)).